The sequence spans 272 residues: HMP-PP phosphatase (272 aa).

Asp-8 acts as the Nucleophile in catalysis. Positions 8, 10, and 212 each coordinate Mg(2+).

This sequence belongs to the HAD-like hydrolase superfamily. Cof family. Mg(2+) is required as a cofactor.

It carries out the reaction 4-amino-2-methyl-5-(diphosphooxymethyl)pyrimidine + H2O = 4-amino-2-methyl-5-(phosphooxymethyl)pyrimidine + phosphate + H(+). Functionally, catalyzes the hydrolysis of 4-amino-2-methyl-5-hydroxymethylpyrimidine pyrophosphate (HMP-PP) to 4-amino-2-methyl-5-hydroxymethylpyrimidine phosphate (HMP-P). The polypeptide is HMP-PP phosphatase (Salmonella typhi).